Reading from the N-terminus, the 377-residue chain is Protein-tyrosine sulfotransferase 2 (377 aa).

The Cytoplasmic portion of the chain corresponds to 1–8 (MRLSMRRA). Residues 9 to 25 (LLAAGLALALVLAVHLG) form a helical; Signal-anchor for type II membrane protein membrane-spanning segment. Topologically, residues 26-377 (QRVLECQAVL…NSTSSHLGSS (352 aa)) are lumenal. Residue 78 to 82 (RSGTT) participates in 3'-phosphoadenylyl sulfate binding. Cysteine 96 and cysteine 156 form a disulfide bridge. The active-site Proton donor/acceptor is the glutamate 99. The interaction with peptide substrate stretch occupies residues 101 to 105 (RIIPR). The 3'-phosphoadenylyl sulfate site is built by arginine 183, serine 191, and arginine 195. The cysteines at positions 225 and 233 are disulfide-linked. 3'-phosphoadenylyl sulfate contacts are provided by residues tyrosine 238, 285-294 (STDQVIKPVN), and lysine 300. Residues asparagine 343 and asparagine 368 are each glycosylated (N-linked (GlcNAc...) asparagine).

It belongs to the protein sulfotransferase family. In terms of assembly, homodimer. Can also form heterodimers with TPST1. N-glycosylated.

It localises to the golgi apparatus membrane. The catalysed reaction is L-tyrosyl-[protein] + 3'-phosphoadenylyl sulfate = O-sulfo-L-tyrosine-[protein] + adenosine 3',5'-bisphosphate + H(+). Catalyzes the O-sulfation of tyrosine residues within acidic motifs of polypeptides, using 3'-phosphoadenylyl sulfate (PAPS) as cosubstrate. The protein is Protein-tyrosine sulfotransferase 2 (TPST2) of Bos taurus (Bovine).